A 200-amino-acid chain; its full sequence is NADH-quinone oxidoreductase subunit I 1 (200 aa).

4Fe-4S ferredoxin-type domains follow at residues 52 to 82 and 98 to 127; these read LNRH…VEGA and RVYQ…MTNE. Residues C62, C65, C68, C72, C107, C110, C113, and C117 each coordinate [4Fe-4S] cluster. The segment at 181–200 is disordered; the sequence is TERQVAVSKGEKPQDEGVEA. Residues 189–200 are compositionally biased toward basic and acidic residues; the sequence is KGEKPQDEGVEA.

This sequence belongs to the complex I 23 kDa subunit family. NDH-1 is composed of 14 different subunits. Subunits NuoA, H, J, K, L, M, N constitute the membrane sector of the complex. It depends on [4Fe-4S] cluster as a cofactor.

It localises to the cell membrane. It carries out the reaction a quinone + NADH + 5 H(+)(in) = a quinol + NAD(+) + 4 H(+)(out). In terms of biological role, NDH-1 shuttles electrons from NADH, via FMN and iron-sulfur (Fe-S) centers, to quinones in the respiratory chain. The immediate electron acceptor for the enzyme in this species is believed to be ubiquinone. Couples the redox reaction to proton translocation (for every two electrons transferred, four hydrogen ions are translocated across the cytoplasmic membrane), and thus conserves the redox energy in a proton gradient. The sequence is that of NADH-quinone oxidoreductase subunit I 1 from Streptomyces avermitilis (strain ATCC 31267 / DSM 46492 / JCM 5070 / NBRC 14893 / NCIMB 12804 / NRRL 8165 / MA-4680).